Here is a 422-residue protein sequence, read N- to C-terminus: Gamma-glutamyl phosphate reductase (422 aa).

Belongs to the gamma-glutamyl phosphate reductase family.

It is found in the cytoplasm. The enzyme catalyses L-glutamate 5-semialdehyde + phosphate + NADP(+) = L-glutamyl 5-phosphate + NADPH + H(+). It participates in amino-acid biosynthesis; L-proline biosynthesis; L-glutamate 5-semialdehyde from L-glutamate: step 2/2. Catalyzes the NADPH-dependent reduction of L-glutamate 5-phosphate into L-glutamate 5-semialdehyde and phosphate. The product spontaneously undergoes cyclization to form 1-pyrroline-5-carboxylate. The chain is Gamma-glutamyl phosphate reductase from Nitrosomonas europaea (strain ATCC 19718 / CIP 103999 / KCTC 2705 / NBRC 14298).